We begin with the raw amino-acid sequence, 37 residues long: Large ribosomal subunit protein bL36 (37 aa).

The protein belongs to the bacterial ribosomal protein bL36 family.

This chain is Large ribosomal subunit protein bL36, found in Legionella pneumophila subsp. pneumophila (strain Philadelphia 1 / ATCC 33152 / DSM 7513).